A 621-amino-acid chain; its full sequence is tRNA uridine 5-carboxymethylaminomethyl modification enzyme MnmG (621 aa).

An FAD-binding site is contributed by 8–13 (GAGHAG). 269–283 (GPRYCPSVEDKIFRF) provides a ligand contact to NAD(+).

Belongs to the MnmG family. Homodimer. Heterotetramer of two MnmE and two MnmG subunits. FAD is required as a cofactor.

Its subcellular location is the cytoplasm. Functionally, NAD-binding protein involved in the addition of a carboxymethylaminomethyl (cmnm) group at the wobble position (U34) of certain tRNAs, forming tRNA-cmnm(5)s(2)U34. The polypeptide is tRNA uridine 5-carboxymethylaminomethyl modification enzyme MnmG (Chlorobium phaeobacteroides (strain DSM 266 / SMG 266 / 2430)).